A 216-amino-acid chain; its full sequence is ATP synthase subunit 5, mitochondrial (216 aa).

Belongs to the ATPase delta chain family. In terms of assembly, F-type ATPases have 2 components, CF(1) - the catalytic core - and CF(0) - the membrane proton channel. CF(1) has five subunits: alpha(3), beta(3), gamma(1), delta(1), epsilon(1). CF(0) has three main subunits: a, b and c.

The protein resides in the mitochondrion. It is found in the mitochondrion inner membrane. Mitochondrial membrane ATP synthase (F(1)F(0) ATP synthase or Complex V) produces ATP from ADP in the presence of a proton gradient across the membrane which is generated by electron transport complexes of the respiratory chain. F-type ATPases consist of two structural domains, F(1) - containing the extramembraneous catalytic core and F(0) - containing the membrane proton channel, linked together by a central stalk and a peripheral stalk. During catalysis, ATP synthesis in the catalytic domain of F(1) is coupled via a rotary mechanism of the central stalk subunits to proton translocation. Part of the complex F(0) domain and the peripheric stalk, which acts as a stator to hold the catalytic alpha(3)beta(3) subcomplex and subunit a/ATP6 static relative to the rotary elements. The chain is ATP synthase subunit 5, mitochondrial (atp5) from Schizosaccharomyces pombe (strain 972 / ATCC 24843) (Fission yeast).